The chain runs to 788 residues: Patatin-like phospholipase domain-containing protein DEHA2B04136g (788 aa).

The helical transmembrane segment at 136 to 156 (WPILIFISCWISLLCFMYIIV) threads the bilayer. One can recognise a PNPLA domain in the interval 311–503 (LCLSGGACFT…RTDIPIDALN (193 aa)). The short motif at 342 to 346 (GTSGG) is the GXSXG element. Ser344 (nucleophile) is an active-site residue. Asp490 functions as the Proton acceptor in the catalytic mechanism. Polar residues predominate over residues 662 to 672 (ANFNTLTSSDS). Positions 662 to 771 (ANFNTLTSSD…DTGSRFLKSF (110 aa)) are disordered. Composition is skewed to acidic residues over residues 690 to 705 (MFDDDEYDSDSSDDEV) and 723 to 749 (EDGDDDEDAYEYYDDDDYGLSTEDEAN).

The protein belongs to the PLPL family.

The protein resides in the membrane. Probable lipid hydrolase. In Debaryomyces hansenii (strain ATCC 36239 / CBS 767 / BCRC 21394 / JCM 1990 / NBRC 0083 / IGC 2968) (Yeast), this protein is Patatin-like phospholipase domain-containing protein DEHA2B04136g.